The sequence spans 613 residues: Penicillin-binding protein activator LpoA (613 aa).

The first 29 residues, methionine 1 to glycine 29, serve as a signal peptide directing secretion. Cysteine 30 carries the N-palmitoyl cysteine lipid modification. Cysteine 30 carries S-diacylglycerol cysteine lipidation.

Belongs to the LpoA family. In terms of assembly, interacts with PBP1a.

It is found in the cell outer membrane. In terms of biological role, regulator of peptidoglycan synthesis that is essential for the function of penicillin-binding protein 1A (PBP1a). The sequence is that of Penicillin-binding protein activator LpoA from Photobacterium profundum (strain SS9).